Here is a 369-residue protein sequence, read N- to C-terminus: 3-dehydroquinate synthase (369 aa).

NAD(+) contacts are provided by residues aspartate 75–lysine 80, glycine 109–aspartate 113, threonine 133–threonine 134, lysine 146, lysine 155, and threonine 173–threonine 176. Zn(2+)-binding residues include glutamate 188, histidine 251, and histidine 268.

The protein belongs to the sugar phosphate cyclases superfamily. Dehydroquinate synthase family. It depends on Co(2+) as a cofactor. Zn(2+) serves as cofactor. The cofactor is NAD(+).

It is found in the cytoplasm. The catalysed reaction is 7-phospho-2-dehydro-3-deoxy-D-arabino-heptonate = 3-dehydroquinate + phosphate. It participates in metabolic intermediate biosynthesis; chorismate biosynthesis; chorismate from D-erythrose 4-phosphate and phosphoenolpyruvate: step 2/7. Functionally, catalyzes the conversion of 3-deoxy-D-arabino-heptulosonate 7-phosphate (DAHP) to dehydroquinate (DHQ). The polypeptide is 3-dehydroquinate synthase (Legionella pneumophila subsp. pneumophila (strain Philadelphia 1 / ATCC 33152 / DSM 7513)).